A 607-amino-acid polypeptide reads, in one-letter code: Albumin B (607 aa).

A signal peptide spans 1-18 (MKWITLICLLISSSFIES). The propeptide occupies 19–24 (RILFKR). Albumin domains lie at 22-209 (FKRD…KQLM), 210-402 (KQSH…RFMN), and 403-600 (EAKE…VLIE). Cu cation is bound at residue His30. Disulfide bonds link Cys80–Cys88, Cys101–Cys117, Cys116–Cys127, Cys147–Cys192, Cys191–Cys200, Cys223–Cys269, Cys268–Cys276, Cys288–Cys302, Cys301–Cys312, Cys339–Cys384, Cys383–Cys392, Cys415–Cys461, Cys460–Cys471, Cys484–Cys500, Cys499–Cys510, Cys537–Cys582, and Cys581–Cys590.

It belongs to the ALB/AFP/VDB family. As to expression, plasma.

It localises to the secreted. Its function is as follows. Serum albumin, the main protein of plasma, has a good binding capacity for water, Ca(2+), Na(+), K(+), fatty acids, hormones, bilirubin and drugs. Its main function is the regulation of the colloidal osmotic pressure of blood. This chain is Albumin B (alb-b), found in Xenopus laevis (African clawed frog).